We begin with the raw amino-acid sequence, 334 residues long: UDP-N-acetylglucosamine--N-acetylmuramyl-(pentapeptide) pyrophosphoryl-undecaprenol N-acetylglucosamine transferase (334 aa).

Residues 11–13, Asn-125, Ser-185, Ile-229, and Gln-274 each bind UDP-N-acetyl-alpha-D-glucosamine; that span reads TGG.

The protein belongs to the glycosyltransferase 28 family. MurG subfamily.

It localises to the cell inner membrane. The catalysed reaction is di-trans,octa-cis-undecaprenyl diphospho-N-acetyl-alpha-D-muramoyl-L-alanyl-D-glutamyl-meso-2,6-diaminopimeloyl-D-alanyl-D-alanine + UDP-N-acetyl-alpha-D-glucosamine = di-trans,octa-cis-undecaprenyl diphospho-[N-acetyl-alpha-D-glucosaminyl-(1-&gt;4)]-N-acetyl-alpha-D-muramoyl-L-alanyl-D-glutamyl-meso-2,6-diaminopimeloyl-D-alanyl-D-alanine + UDP + H(+). It participates in cell wall biogenesis; peptidoglycan biosynthesis. Functionally, cell wall formation. Catalyzes the transfer of a GlcNAc subunit on undecaprenyl-pyrophosphoryl-MurNAc-pentapeptide (lipid intermediate I) to form undecaprenyl-pyrophosphoryl-MurNAc-(pentapeptide)GlcNAc (lipid intermediate II). The polypeptide is UDP-N-acetylglucosamine--N-acetylmuramyl-(pentapeptide) pyrophosphoryl-undecaprenol N-acetylglucosamine transferase (Thermosipho melanesiensis (strain DSM 12029 / CIP 104789 / BI429)).